Reading from the N-terminus, the 154-residue chain is Myoglobin-2 (154 aa).

Positions 2–148 (GLSDGEWQLV…FRKDIATKYK (147 aa)) constitute a Globin domain. Residue H65 participates in nitrite binding. H65 lines the O2 pocket. H94 is a heme b binding site.

This sequence belongs to the globin family. As to quaternary structure, monomeric.

The protein localises to the cytoplasm. Its subcellular location is the sarcoplasm. The catalysed reaction is Fe(III)-heme b-[protein] + nitric oxide + H2O = Fe(II)-heme b-[protein] + nitrite + 2 H(+). It carries out the reaction H2O2 + AH2 = A + 2 H2O. Monomeric heme protein which primary function is to store oxygen and facilitate its diffusion within muscle tissues. Reversibly binds oxygen through a pentacoordinated heme iron and enables its timely and efficient release as needed during periods of heightened demand. Depending on the oxidative conditions of tissues and cells, and in addition to its ability to bind oxygen, it also has a nitrite reductase activity whereby it regulates the production of bioactive nitric oxide. Under stress conditions, like hypoxia and anoxia, it also protects cells against reactive oxygen species thanks to its pseudoperoxidase activity. This Stenella attenuata (Pantropical spotted dolphin) protein is Myoglobin-2 (MB2).